The following is a 288-amino-acid chain: Phytanoyl-CoA dioxygenase domain-containing protein 1 homolog (288 aa).

Residues Lys-95, Met-134, 149-151 (HVD), and Trp-167 each bind 2-oxoglutarate. The Fe cation site is built by His-149 and Asp-151. Position 242 (His-242) interacts with Fe cation. The 2-oxoglutarate site is built by Ser-244 and Arg-253.

The protein belongs to the PhyH family. PHYHD1 subfamily. The cofactor is Fe cation.

Functionally, has alpha-ketoglutarate-dependent dioxygenase activity. Does not show detectable activity towards fatty acid CoA thioesters. Is not expected to be active with phytanoyl CoA. The polypeptide is Phytanoyl-CoA dioxygenase domain-containing protein 1 homolog (Caenorhabditis briggsae).